The sequence spans 265 residues: NAD kinase (265 aa).

Asp45 (proton acceptor) is an active-site residue. Residues 45–46 (DG), 121–122 (NE), Arg147, Asp149, 160–165 (TAYSKS), Ala184, and Gln222 each bind NAD(+).

The protein belongs to the NAD kinase family. The cofactor is a divalent metal cation.

It localises to the cytoplasm. It carries out the reaction NAD(+) + ATP = ADP + NADP(+) + H(+). Functionally, involved in the regulation of the intracellular balance of NAD and NADP, and is a key enzyme in the biosynthesis of NADP. Catalyzes specifically the phosphorylation on 2'-hydroxyl of the adenosine moiety of NAD to yield NADP. This is NAD kinase from Lacticaseibacillus paracasei (strain ATCC 334 / BCRC 17002 / CCUG 31169 / CIP 107868 / KCTC 3260 / NRRL B-441) (Lactobacillus paracasei).